An 864-amino-acid chain; its full sequence is Dynamin-1 (864 aa).

Positions 28-294 constitute a Dynamin-type G domain; the sequence is DLDLPQIAVV…LTNHIRDTLP (267 aa). A G1 motif region spans residues 38–45; sequence GGQSAGKS. 7 residues coordinate GDP: Ser-41, Gly-43, Lys-44, Ser-45, Ser-46, Arg-59, and Gly-60. The G2 motif stretch occupies residues 64–66; the sequence is VTR. At Tyr-80 the chain carries Phosphotyrosine. A 3'-nitrotyrosine; alternate modification is found at Tyr-125. Phosphotyrosine; alternate is present on Tyr-125. The G3 motif stretch occupies residues 136 to 139; it reads DLPG. The interval 205-208 is G4 motif; sequence TKLD. Positions 206, 208, 211, 236, 237, and 239 each coordinate GDP. Residues 235 to 238 are G5 motif; the sequence is VNRS. Ser-306 and Ser-347 each carry phosphoserine. Residue Tyr-354 is modified to Phosphotyrosine. Ser-512 is subject to Phosphoserine. In terms of domain architecture, PH spans 519-625; the sequence is LVIRKGWLTI…WKASFLRAGV (107 aa). A GED domain is found at 659 to 750; that stretch reads VETIRNLVDS…IIGDINTTTV (92 aa). A disordered region spans residues 767 to 864; the sequence is SVPAGRRSPT…PESPRPPFDL (98 aa). Phosphoserine; by GSK3-beta is present on Ser-774. Phosphoserine is present on Ser-778. Position 796 is an omega-N-methylarginine (Arg-796). Phosphoserine is present on Ser-822. Residues 825 to 843 show a composition bias toward pro residues; that stretch reads PFGPPPQVPSRPNRAPPGV. Ser-851 and Ser-857 each carry phosphoserine.

It belongs to the TRAFAC class dynamin-like GTPase superfamily. Dynamin/Fzo/YdjA family. As to quaternary structure, homodimer; homodimerization is mediated by the dynamin-type G domain which promotes assembly-stimulated GTPase activity. Homo-tetramer formed from two dimers in the absence of lipid. Oligomerizes into a helical polymer that self-assembles around the vesicle membrane, when associated to the menbrane through lipid binding. Interacts (via C-terminal proline-rich domain (PRD)) with SNX9 (via SH3 domain); this interaction allows regulation of DNM1 self-assembly during late stages of endocytic vesicle formation and supports DNM1's early functions in accelerating clathrin-coated pits (CCPs) maturation in non neuronals cell. Interacts (via C-terminal proline-rich domain (PRD)) with MYO1E (via SH3 domain); this interaction regulates receptor-mediated endocytosis. Interacts with SNX33 (via SH3 domain); this interaction decreases DNM1-dependent endocytosis. Interacts with DIAPH1. Interacts with GRB2 (via SH3 domain); this interaction mediates disassembly of DNM1 polymers, therefore modulates self-assembly. Forms a complex with BIN1 (via SH3 domain) and SH3GL2 (via SH3 domain). Forms a complex with SH3GL2 (via SH3 domain) and AMPH (via SH3 domain). Forms a complex with SH3GL2 (via SH3 domain) and SYNJ1. Interacts with AMPH. Interacts (via C-terminal proline-rich domain (PRD)) with SYT1; this interaction facilitates vesicle fission during clathrin-mediated endocytosis (CME). Interacts (via C-terminal proline-rich domain (PRD)) with PLCG1 (via SH3 domain); this interaction stimulates the release of GDP from DNM1 and enhances DNM1-dependent endocytosis. Interacts with SNPH; this interaction inhibits the binding of DNM1 to AMPH and DNM1-receptor-mediated endocytosis. Interacts with CAV1. Interacts with SH3GLB1 (via SH3 domain). Interacts with PACSIN1 (via SH3 domain), PACSIN2 (via SH3 domain) and PACSIN3 (via SH3 domain). Interacts with UNC119; this interaction decreases DNM1's GTPase activity and affects DNM1's interaction with AMPH. Interacts (GTP-bound form) with DNAJC6; this interaction allows clathrin-coated vesicle (CCV) formation at the plasma membrane. In terms of processing, phosphorylation at Ser-774 by GSK3B/GSK3-beta leads to inactivation of receptor-mediated endocytosis in non-neuronal cells. Dephosphorylation at Ser-774, through the EGFR downstream signaling, leads to activation and regulates early stages of clathrin-mediated endocytosis (CME). Phosphorylated by CDK5 leading to synaptic vesicle endocytosis (SVE) activation.

The protein localises to the cell membrane. The protein resides in the membrane. It is found in the clathrin-coated pit. Its subcellular location is the cytoplasmic vesicle. It localises to the presynapse. The protein localises to the secretory vesicle. The protein resides in the chromaffin granule. It catalyses the reaction GTP + H2O = GDP + phosphate + H(+). GTPase activity is activated by 1-phosphatidyl-1D-myo-inositol 4,5-bisphosphate. GTPase activity is inhibited by the heterodimer G protein formed by GNB1 and GNG2 with an IC(50)=400 nM when DNM1 concentration is 5 nM. Its function is as follows. Catalyzes the hydrolysis of GTP and utilizes this energy to mediate vesicle scission and participates in many forms of endocytosis, such as clathrin-mediated endocytosis or synaptic vesicle endocytosis as well as rapid endocytosis (RE). Associates to the membrane, through lipid binding, and self-assembles into rings and stacks of interconnected rings through oligomerization to form a helical polymer around the vesicle membrane leading to constriction of invaginated coated pits around their necks. Self-assembly of the helical polymer induces membrane tubules narrowing until the polymer reaches a length sufficient to trigger GTP hydrolysis. Depending on the curvature imposed on the tubules, membrane detachment from the helical polymer upon GTP hydrolysis can cause spontaneous hemifission followed by complete fission. May play a role in regulating early stages of clathrin-mediated endocytosis in non-neuronal cells through its activation by dephosphorylation via the signaling downstream of EGFR. Controls vesicle size at a step before fission, during formation of membrane pits, at hippocampal synapses. Controls plastic adaptation of the synaptic vesicle recycling machinery to high levels of activity. Mediates rapid endocytosis (RE), a Ca(2+)-dependent and clathrin- and K(+)-independent process in chromaffin cells. Microtubule-associated force-producing protein involved in producing microtubule bundles and able to bind and hydrolyze GTP. Through its interaction with DNAJC6, acts during the early steps of clathrin-coated vesicle (CCV) formation. The sequence is that of Dynamin-1 from Homo sapiens (Human).